We begin with the raw amino-acid sequence, 817 residues long: Protein TOC75, chloroplastic (817 aa).

Residues 1-31 (MALTSQSLFFSPLAAGPSRRVRGRGRSTSVS) constitute a chloroplast transit peptide. The tract at residues 14-59 (AAGPSRRVRGRGRSTSVSAAASASSHNSQPHGHPQQPLAVASSSSK) is disordered. Residues 26-38 (RSTSVSAAASASS) are compositionally biased toward low complexity. A chloroplast; outer membrane-targeting transit peptide spans 32–135 (AAASASSHNS…RIFSGGAAHA (104 aa)). Over 136–147 (DEKSSGDWDPHG) the chain is Chloroplast intermembrane. A beta stranded transmembrane segment spans residues 148–156 (LPANINVPM). Residues 157–164 (TKLSGLKR) lie on the Cytoplasmic side of the membrane. A beta stranded transmembrane segment spans residues 165–173 (YKISELKFF). Residues 174 to 232 (DRAAGGGGAFTGPEDSFFEMVTLQPGGVYTKSQLLKELETLVSCGMFERVDLEGKAKPD) are Chloroplast intermembrane-facing. Residues 233–241 (GTLGLTVSF) form a beta stranded membrane-spanning segment. Residues 242-254 (VESVWSAAKQFKC) are Cytoplasmic-facing. Residues 255–261 (INVGLMS) form a beta stranded membrane-spanning segment. At 262–364 (QSGQVDFDQD…VVCEVVEGDI (103 aa)) the chain is on the chloroplast intermembrane side. A beta stranded membrane pass occupies residues 365–372 (TKVEYQFQ). The Cytoplasmic segment spans residues 373–417 (DKLGNFVEGNTQIPIIDRELPQQLRPGHIFNIGAGKQALKNINSL). Residues 418-425 (ALFSNIEV) form a beta stranded membrane-spanning segment. Topologically, residues 426-434 (NPRPDETKE) are chloroplast intermembrane. The beta stranded transmembrane segment at 435–443 (GGIVVEIKL) threads the bilayer. Topologically, residues 444 to 449 (KELEPK) are cytoplasmic. A beta stranded transmembrane segment spans residues 450 to 459 (SAEVSTEWSI). Residues 460-471 (VPGREGRPTLAS) are Chloroplast intermembrane-facing. A beta stranded transmembrane segment spans residues 472–480 (IQPGGTVSF). At 481–507 (EHRNIYGLNRSIVGSVTSSNLLNPQDD) the chain is on the cytoplasmic side. Residues 508–516 (LSFKLEYVH) form a beta stranded membrane-spanning segment. Over 517-561 (PYLDGVDDRNKNRTFKTSCFNTRKLSPVFVAGPNMDEAPPVWVDR) the chain is Chloroplast intermembrane. Residues 562–569 (VGFKANIT) traverse the membrane as a beta stranded segment. Residues 570–577 (ESFTRQSK) lie on the Cytoplasmic side of the membrane. A beta stranded transmembrane segment spans residues 578–585 (FTYGLVVE). The Chloroplast intermembrane portion of the chain corresponds to 586 to 692 (EITTRDETNS…QEKGAGKPLP (107 aa)). A beta stranded membrane pass occupies residues 693–701 (AVLVLHGHY). Topologically, residues 702–713 (AGCVGDLPSYDA) are cytoplasmic. The beta stranded transmembrane segment at 714–722 (FTLGGPYSV) threads the bilayer. Over 723–784 (RGYGMGELGA…FFRRVGHGSS (62 aa)) the chain is Chloroplast intermembrane. The chain crosses the membrane as a beta stranded span at residues 785-791 (YGLGVKL). The Cytoplasmic portion of the chain corresponds to 792-805 (GLVRGEYIVDHNAG). The beta stranded transmembrane segment at 806 to 813 (TGTVFFRF) threads the bilayer. The Chloroplast intermembrane portion of the chain corresponds to 814-817 (GERF).

The protein belongs to the TOC75 family. In terms of assembly, part of the TOC core complex that includes a protein for the specific recognition of transit peptides surrounded by a ring composed of four proteins forming translocation channels, and four to five GTP-binding proteins providing energy. This core complex can interact with components of the TIC complex to form a larger import complex. Chloroplastic protein precursors also interact with these complexes.

Its subcellular location is the plastid. It is found in the chloroplast outer membrane. Mediates the insertion of proteins targeted to the outer membrane of chloroplasts. Required for the import of protein precursors into chloroplasts. Forms the voltage-dependent preprotein translocation channels (hydrophilic beta barrel) of the TOC complex in the chloroplastic outer membrane. The polypeptide is Protein TOC75, chloroplastic (TOC75) (Oryza sativa subsp. japonica (Rice)).